We begin with the raw amino-acid sequence, 338 residues long: TPR repeat-containing protein MJ0941 (338 aa).

8 TPR repeats span residues 27-62 (LEAVANVLRAYRELFEGNLIKALYYVDKALELEPDF), 63-96 (YLALFLKGLALSAKGEIKEAITTFEELLSYESKN), 97-130 (PITWVFVGQLYGMSGNCDEALKCYNKALGIENRF), 131-164 (LSAFLLKTICLEFLGEYDELLKCYNEVLTYTPNF), 165-198 (VPMWVKKAEILRKLGRYEDALLCLNRALELKPHD), 199-232 (KNALYLKGVLLKRMGKFREALECFKKLIDELNVK), 268-301 (VALWYFKGELYERLGKLDEALKCYEKVIELQPHY), and 302-335 (IKALLSKARIYERQGNIEAAIEYYNKAVENIHKD).

This is TPR repeat-containing protein MJ0941 from Methanocaldococcus jannaschii (strain ATCC 43067 / DSM 2661 / JAL-1 / JCM 10045 / NBRC 100440) (Methanococcus jannaschii).